Reading from the N-terminus, the 98-residue chain is Large ribosomal subunit protein uL23 (98 aa).

The protein belongs to the universal ribosomal protein uL23 family. As to quaternary structure, part of the 50S ribosomal subunit. Contacts protein L29, and trigger factor when it is bound to the ribosome.

One of the early assembly proteins it binds 23S rRNA. One of the proteins that surrounds the polypeptide exit tunnel on the outside of the ribosome. Forms the main docking site for trigger factor binding to the ribosome. The polypeptide is Large ribosomal subunit protein uL23 (Bifidobacterium animalis subsp. lactis (strain AD011)).